We begin with the raw amino-acid sequence, 291 residues long: 3-hydroxy-5-phosphonooxypentane-2,4-dione thiolase (291 aa).

The active-site Schiff-base intermediate with substrate is the Lys203.

Belongs to the DeoC/FbaB aldolase family. In terms of assembly, homodecamer.

It is found in the cytoplasm. It catalyses the reaction dihydroxyacetone phosphate + acetyl-CoA = 3-hydroxy-2,4-dioxopentyl phosphate + CoA. Functionally, involved in the degradation of phospho-AI-2, thereby terminating induction of the lsr operon and closing the AI-2 signaling cycle. Catalyzes the transfer of an acetyl moiety from 3-hydroxy-5-phosphonooxypentane-2,4-dione to CoA to form glycerone phosphate and acetyl-CoA. The chain is 3-hydroxy-5-phosphonooxypentane-2,4-dione thiolase from Escherichia coli O139:H28 (strain E24377A / ETEC).